The sequence spans 208 residues: Small ribosomal subunit protein uS4A (208 aa).

The S4 RNA-binding domain maps to 98 to 161 (LRLDNVVFRM…RKVLRISEAL (64 aa)).

It belongs to the universal ribosomal protein uS4 family. Part of the 30S ribosomal subunit. Contacts protein S5. The interaction surface between S4 and S5 is involved in control of translational fidelity.

In terms of biological role, one of the primary rRNA binding proteins, it binds directly to 16S rRNA where it nucleates assembly of the body of the 30S subunit. Functionally, with S5 and S12 plays an important role in translational accuracy. The polypeptide is Small ribosomal subunit protein uS4A (Myxococcus xanthus (strain DK1622)).